A 738-amino-acid chain; its full sequence is Cleavage and polyadenylation specificity factor subunit 2 (738 aa).

This sequence belongs to the metallo-beta-lactamase superfamily. RNA-metabolizing metallo-beta-lactamase-like family. CPSF2/YSH1 subfamily. As to quaternary structure, CPSF is a heterotetramer composed of four distinct subunits 160, 100, 70 and 30 kDa.

The protein localises to the nucleus. CPSF plays a key role in pre-mRNA 3'-end formation, recognizing the AAUAAA signal sequence and interacting with poly(A)polymerase and other factors to bring about cleavage and poly(A) addition. The polypeptide is Cleavage and polyadenylation specificity factor subunit 2 (Oryza sativa subsp. japonica (Rice)).